The sequence spans 91 residues: Acylphosphatase (91 aa).

Positions 5–91 constitute an Acylphosphatase-like domain; that stretch reads RLTAWVRGHV…RGSFTGFEER (87 aa). Catalysis depends on residues R20 and N38.

This sequence belongs to the acylphosphatase family.

The catalysed reaction is an acyl phosphate + H2O = a carboxylate + phosphate + H(+). The protein is Acylphosphatase (acyP) of Thermobifida fusca (strain YX).